We begin with the raw amino-acid sequence, 79 residues long: Cell division protein ZapB (79 aa).

A coiled-coil region spans residues 6–78 (FEKLEVKVQQ…LRALLGKMEE (73 aa)).

The protein belongs to the ZapB family. In terms of assembly, homodimer. The ends of the coiled-coil dimer bind to each other, forming polymers. Interacts with FtsZ.

It is found in the cytoplasm. Non-essential, abundant cell division factor that is required for proper Z-ring formation. It is recruited early to the divisome by direct interaction with FtsZ, stimulating Z-ring assembly and thereby promoting cell division earlier in the cell cycle. Its recruitment to the Z-ring requires functional FtsA or ZipA. This Yersinia enterocolitica serotype O:8 / biotype 1B (strain NCTC 13174 / 8081) protein is Cell division protein ZapB.